The following is a 94-amino-acid chain: Co-chaperonin GroES (94 aa).

As to quaternary structure, heptamer of 7 subunits arranged in a ring. Interacts with the chaperonin GroEL.

The protein resides in the cytoplasm. Together with the chaperonin GroEL, plays an essential role in assisting protein folding. The GroEL-GroES system forms a nano-cage that allows encapsulation of the non-native substrate proteins and provides a physical environment optimized to promote and accelerate protein folding. GroES binds to the apical surface of the GroEL ring, thereby capping the opening of the GroEL channel. This Thermoanaerobacter brockii (Thermoanaerobium brockii) protein is Co-chaperonin GroES.